The chain runs to 96 residues: Co-chaperonin GroES (96 aa).

It belongs to the GroES chaperonin family. As to quaternary structure, heptamer of 7 subunits arranged in a ring. Interacts with the chaperonin GroEL.

Its subcellular location is the cytoplasm. Its function is as follows. Together with the chaperonin GroEL, plays an essential role in assisting protein folding. The GroEL-GroES system forms a nano-cage that allows encapsulation of the non-native substrate proteins and provides a physical environment optimized to promote and accelerate protein folding. GroES binds to the apical surface of the GroEL ring, thereby capping the opening of the GroEL channel. The protein is Co-chaperonin GroES of Ralstonia nicotianae (strain ATCC BAA-1114 / GMI1000) (Ralstonia solanacearum).